Here is a 314-residue protein sequence, read N- to C-terminus: Homoserine kinase (314 aa).

96–106 (PIGSGLGSSAC) contacts ATP.

It belongs to the GHMP kinase family. Homoserine kinase subfamily.

The protein localises to the cytoplasm. It catalyses the reaction L-homoserine + ATP = O-phospho-L-homoserine + ADP + H(+). The protein operates within amino-acid biosynthesis; L-threonine biosynthesis; L-threonine from L-aspartate: step 4/5. Functionally, catalyzes the ATP-dependent phosphorylation of L-homoserine to L-homoserine phosphate. This is Homoserine kinase from Haemophilus influenzae (strain 86-028NP).